Here is a 318-residue protein sequence, read N- to C-terminus: Protein IMPACT-A (318 aa).

Residues 14–116 (DEVEALTSIY…EKIREFLLGK (103 aa)) form the RWD domain. Residues 296 to 318 (EESSKQTAKSKKVGKECKKKADH) are disordered. The segment covering 308–318 (VGKECKKKADH) has biased composition (basic and acidic residues).

It belongs to the IMPACT family. As to quaternary structure, interacts with GCN1; prevents the interaction of GCN1 with EIF2AK4/GCN2 and inhibits EIF2AK4/GCN2 kinase activity. Interaction with RPL39; this interaction occurs in a GCN1-independent manner. Associates with ribosomes; this interaction occurs in a GCN1-independent manner. Associates with actin; this interaction occurs in a GCN1-independent manner.

The protein localises to the cytoplasm. In terms of biological role, translational regulator that ensures constant high levels of translation upon a variety of stress conditions, such as amino acid starvation, UV-C irradiation, proteasome inhibitor treatment and glucose deprivation. Plays a role as a negative regulator of the EIF2AK4/GCN2 kinase activity; impairs GCN1-mediated EIF2AK4/GCN2 activation, and hence EIF2AK4/GCN2-mediated eIF-2-alpha phosphorylation and subsequent down-regulation of protein synthesis. Plays a role in differentiation of neuronal cells by stimulating neurite outgrowth. This chain is Protein IMPACT-A (impact-A), found in Xenopus tropicalis (Western clawed frog).